A 316-amino-acid chain; its full sequence is Pantothenate kinase (316 aa).

95–102 (GSVAVGKS) serves as a coordination point for ATP.

The protein belongs to the prokaryotic pantothenate kinase family.

It is found in the cytoplasm. The enzyme catalyses (R)-pantothenate + ATP = (R)-4'-phosphopantothenate + ADP + H(+). The protein operates within cofactor biosynthesis; coenzyme A biosynthesis; CoA from (R)-pantothenate: step 1/5. In Shewanella woodyi (strain ATCC 51908 / MS32), this protein is Pantothenate kinase.